A 122-amino-acid polypeptide reads, in one-letter code: Large ribosomal subunit protein bL12 (122 aa).

This sequence belongs to the bacterial ribosomal protein bL12 family. Homodimer. Part of the ribosomal stalk of the 50S ribosomal subunit. Forms a multimeric L10(L12)X complex, where L10 forms an elongated spine to which 2 to 4 L12 dimers bind in a sequential fashion. Binds GTP-bound translation factors.

Functionally, forms part of the ribosomal stalk which helps the ribosome interact with GTP-bound translation factors. Is thus essential for accurate translation. In Buchnera aphidicola subsp. Baizongia pistaciae (strain Bp), this protein is Large ribosomal subunit protein bL12.